The sequence spans 85 residues: Large ribosomal subunit protein bL27 (85 aa).

Positions Met-1–Met-20 are disordered.

This sequence belongs to the bacterial ribosomal protein bL27 family.

The chain is Large ribosomal subunit protein bL27 from Acinetobacter baumannii (strain AB307-0294).